The following is a 207-amino-acid chain: Guanylate kinase (207 aa).

Residues 4–184 (GTLYIVSAPS…ALLDLKTIIR (181 aa)) form the Guanylate kinase-like domain. Residue 11 to 18 (APSGAGKS) participates in ATP binding.

Belongs to the guanylate kinase family.

It localises to the cytoplasm. The enzyme catalyses GMP + ATP = GDP + ADP. Its function is as follows. Essential for recycling GMP and indirectly, cGMP. This chain is Guanylate kinase, found in Sodalis glossinidius (strain morsitans).